A 267-amino-acid chain; its full sequence is Indole-3-glycerol phosphate synthase (267 aa).

The protein belongs to the TrpC family.

It catalyses the reaction 1-(2-carboxyphenylamino)-1-deoxy-D-ribulose 5-phosphate + H(+) = (1S,2R)-1-C-(indol-3-yl)glycerol 3-phosphate + CO2 + H2O. It functions in the pathway amino-acid biosynthesis; L-tryptophan biosynthesis; L-tryptophan from chorismate: step 4/5. The sequence is that of Indole-3-glycerol phosphate synthase from Ralstonia pickettii (strain 12J).